We begin with the raw amino-acid sequence, 80 residues long: Large ribosomal subunit protein bL28 (80 aa).

The interval methionine 1–serine 21 is disordered.

It belongs to the bacterial ribosomal protein bL28 family.

This is Large ribosomal subunit protein bL28 from Azobacteroides pseudotrichonymphae genomovar. CFP2.